The primary structure comprises 720 residues: Inactive serine protease PAMR1 (720 aa).

Positions 1-21 are cleaved as a signal peptide; the sequence is MELGCWTQLGLTFLQLLLISS. Cystine bridges form between Cys-128-Cys-150, Cys-177-Cys-199, Cys-239-Cys-250, Cys-244-Cys-260, Cys-262-Cys-271, Cys-280-Cys-329, Cys-315-Cys-342, and Cys-414-Cys-442. Positions 128-236 constitute a CUB domain; that stretch reads CGQVLRAPKG…DGFHAIFEEI (109 aa). One can recognise an EGF-like domain in the interval 235–272; it reads EITACSSSPCFHDGTCVLDKAGSYKCACLAGYTGQRCE. Sushi domains follow at residues 278–344 and 387–444; these read RNCS…ICIK and APTK…SCIP. A Peptidase S1 domain is found at 445–720; the sequence is ICGKIENVTA…FKDWIERNMK (276 aa). Asn-451 carries N-linked (GlcNAc...) asparagine glycosylation. Cys-489 and Cys-505 are oxidised to a cystine. Asn-614 carries an N-linked (GlcNAc...) asparagine glycan. Intrachain disulfides connect Cys-630–Cys-649 and Cys-661–Cys-697.

It belongs to the peptidase S1 family.

Its subcellular location is the secreted. In terms of biological role, may play a role in regeneration of skeletal muscle. In Pongo abelii (Sumatran orangutan), this protein is Inactive serine protease PAMR1 (PAMR1).